Here is a 294-residue protein sequence, read N- to C-terminus: Potassium-transporting ATPase subunit beta (294 aa).

The Cytoplasmic portion of the chain corresponds to 1–36 (MAALQEKKSCSQRMAEFRQYCWNPDTGQMLGRTPAR). A helical; Signal-anchor for type II membrane protein membrane pass occupies residues 37-57 (WVWISLYYAAFYVVMTGLFAL). Topologically, residues 58-294 (CIYVLMQTID…KVEFKLTIQK (237 aa)) are extracellular. Asn-99, Asn-103, Asn-130, Asn-146, and Asn-161 each carry an N-linked (GlcNAc...) asparagine glycan. An intrachain disulfide couples Cys-131 to Cys-152. Cysteines 162 and 178 form a disulfide. Asn-193 and Asn-225 each carry an N-linked (GlcNAc...) asparagine glycan. The interval 194–294 (NTAPRVDCTF…KVEFKLTIQK (101 aa)) is immunoglobulin-like. A disulfide bridge connects residues Cys-201 and Cys-266.

It belongs to the X(+)/potassium ATPases subunit beta family. In terms of assembly, the ATPase pump is composed of two subunits: alpha (catalytic) and beta (regulatory). Interacts with alpha subunit ATP12A; this interaction is required for the formation of a functionally active pump and targeting at the plasma membrane. Interacts (via N-terminus) with alpha subunit ATP4A (via the P-domain). N-glycosylation is necessary for assembly and functional expression of the pump at the plasma membrane. As to expression, stomach.

It is found in the apical cell membrane. Its subcellular location is the cell membrane. Its function is as follows. The beta subunit of the gastric H(+)/K(+) ATPase pump which transports H(+) ions in exchange for K(+) ions across the apical membrane of parietal cells. Plays a structural and regulatory role in the assembly and membrane targeting of a functionally active pump. Within a transport cycle, the transfer of a H(+) ion across the membrane is coupled to ATP hydrolysis and is associated with a transient phosphorylation of the alpha subunit that shifts the pump conformation from inward-facing (E1) to outward-facing state (E2). Interacts with the phosphorylation domain of the alpha subunit and functions as a ratchet, stabilizing the lumenal-open E2 conformation and preventing the reverse reaction of the transport cycle. The protein is Potassium-transporting ATPase subunit beta (Atp4b) of Rattus norvegicus (Rat).